The primary structure comprises 214 residues: Sugar transporter SWEET1 (214 aa).

The next 7 helical transmembrane spans lie at 3–23 (WMWL…SSGL), 38–58 (IQFL…YYGY), 65–85 (LIIV…AYIL), 93–113 (VVSQ…YFTL), 125–145 (LGLF…ADLA), 157–177 (SFPL…YGWV), and 181–201 (LYIT…FWLF). A MtN3/slv 1 domain is found at 6-89 (LLSGACIVFT…MAAYILYSLE (84 aa)). One can recognise a MtN3/slv 2 domain in the interval 124-207 (QLGLFCSIFT…FWLFSRYPPD (84 aa)).

This sequence belongs to the SWEET sugar transporter family.

It localises to the golgi apparatus membrane. The protein localises to the cell membrane. In terms of biological role, mediates sugar transport across membranes. The chain is Sugar transporter SWEET1 (slc50a1) from Xenopus tropicalis (Western clawed frog).